A 310-amino-acid polypeptide reads, in one-letter code: Transcription initiation factor TFIID subunit 8 (310 aa).

The segment at 1–30 is disordered; it reads MADAAATAGAGGSGTRSGSKQSTNPADNYH. An N-acetylalanine modification is found at alanine 2. The Histone-fold; involved in forming hexamer structure in TFIID complex domain maps to 35–102; it reads RTLQVVVSSL…IVVTLVEMGF (68 aa). Threonine 130 carries the phosphothreonine modification. The segment at 262-310 is disordered; the sequence is DSGAEKENTSVLQQNPSLSGSRNGEENIIDNPYLRPVKKPKIRRKKSLS. Polar residues predominate over residues 270–283; that stretch reads TSVLQQNPSLSGSR. Serine 271 carries the phosphoserine modification. The Nuclear localization signal motif lies at 294 to 307; that stretch reads YLRPVKKPKIRRKK. Residues 297 to 310 show a composition bias toward basic residues; sequence PVKKPKIRRKKSLS.

The protein belongs to the TAF8 family. In terms of assembly, component of the TFIID basal transcription factor complex, composed of TATA-box-binding protein TBP, and a number of TBP-associated factors (TAFs), including TAF1, TAF2, TAF3, TAF4, TAF5, TAF6, TAF7, TAF8, TAF9, TAF10, TAF11, TAF12 and TAF13. Interacts with TBP, TAF1, TAF6, TAF10, TAF11 and TAF13. Component also of a small TAF complex (SMAT) containing TAF8, TAF10 and SUPT7L. Forms a heterodimer with TAF10. Interaction with TAF10 is mediated mainly via its histone fold domain while interaction with SUPT7L is via its C-terminal region.

It is found in the nucleus. It localises to the cytoplasm. Functionally, the TFIID basal transcription factor complex plays a major role in the initiation of RNA polymerase II (Pol II)-dependent transcription. TFIID recognizes and binds promoters with or without a TATA box via its subunit TBP, a TATA-box-binding protein, and promotes assembly of the pre-initiation complex (PIC). The TFIID complex consists of TBP and TBP-associated factors (TAFs), including TAF1, TAF2, TAF3, TAF4, TAF5, TAF6, TAF7, TAF8, TAF9, TAF10, TAF11, TAF12 and TAF13. The TFIID complex structure can be divided into 3 modules TFIID-A, TFIID-B, and TFIID-C. TAF8 is involved in forming the TFIID-B module, together with TAF5. Mediates both basal and activator-dependent transcription. Plays a role in the differentiation of preadipocyte fibroblasts to adipocytes, however, does not seem to play a role in differentiation of myoblasts. Required for the integration of TAF10 in the TAF complex. May be important for survival of cells of the inner cell mass which constitute the pluripotent cell population of the early embryo. This chain is Transcription initiation factor TFIID subunit 8 (TAF8), found in Homo sapiens (Human).